The sequence spans 206 residues: Thiamine-phosphate synthase (206 aa).

4-amino-2-methyl-5-(diphosphooxymethyl)pyrimidine-binding positions include 33–37 (QMRFK) and N65. Mg(2+) is bound by residues D66 and D85. T104 provides a ligand contact to 4-amino-2-methyl-5-(diphosphooxymethyl)pyrimidine. 130–132 (TAT) contacts 2-[(2R,5Z)-2-carboxy-4-methylthiazol-5(2H)-ylidene]ethyl phosphate. 4-amino-2-methyl-5-(diphosphooxymethyl)pyrimidine is bound at residue K133. G166 lines the 2-[(2R,5Z)-2-carboxy-4-methylthiazol-5(2H)-ylidene]ethyl phosphate pocket.

The protein belongs to the thiamine-phosphate synthase family. The cofactor is Mg(2+).

The enzyme catalyses 2-[(2R,5Z)-2-carboxy-4-methylthiazol-5(2H)-ylidene]ethyl phosphate + 4-amino-2-methyl-5-(diphosphooxymethyl)pyrimidine + 2 H(+) = thiamine phosphate + CO2 + diphosphate. It carries out the reaction 2-(2-carboxy-4-methylthiazol-5-yl)ethyl phosphate + 4-amino-2-methyl-5-(diphosphooxymethyl)pyrimidine + 2 H(+) = thiamine phosphate + CO2 + diphosphate. It catalyses the reaction 4-methyl-5-(2-phosphooxyethyl)-thiazole + 4-amino-2-methyl-5-(diphosphooxymethyl)pyrimidine + H(+) = thiamine phosphate + diphosphate. The protein operates within cofactor biosynthesis; thiamine diphosphate biosynthesis; thiamine phosphate from 4-amino-2-methyl-5-diphosphomethylpyrimidine and 4-methyl-5-(2-phosphoethyl)-thiazole: step 1/1. Condenses 4-methyl-5-(beta-hydroxyethyl)thiazole monophosphate (THZ-P) and 2-methyl-4-amino-5-hydroxymethyl pyrimidine pyrophosphate (HMP-PP) to form thiamine monophosphate (TMP). This Flavobacterium psychrophilum (strain ATCC 49511 / DSM 21280 / CIP 103535 / JIP02/86) protein is Thiamine-phosphate synthase.